The sequence spans 554 residues: Dihydroxy-acid dehydratase (554 aa).

Asp-78 provides a ligand contact to Mg(2+). Cys-119 serves as a coordination point for [2Fe-2S] cluster. The Mg(2+) site is built by Asp-120 and Lys-121. An N6-carboxylysine modification is found at Lys-121. A [2Fe-2S] cluster-binding site is contributed by Cys-191. A Mg(2+)-binding site is contributed by Glu-444. The Proton acceptor role is filled by Ser-470.

The protein belongs to the IlvD/Edd family. In terms of assembly, homodimer. Requires [2Fe-2S] cluster as cofactor. The cofactor is Mg(2+).

The enzyme catalyses (2R)-2,3-dihydroxy-3-methylbutanoate = 3-methyl-2-oxobutanoate + H2O. The catalysed reaction is (2R,3R)-2,3-dihydroxy-3-methylpentanoate = (S)-3-methyl-2-oxopentanoate + H2O. It participates in amino-acid biosynthesis; L-isoleucine biosynthesis; L-isoleucine from 2-oxobutanoate: step 3/4. Its pathway is amino-acid biosynthesis; L-valine biosynthesis; L-valine from pyruvate: step 3/4. In terms of biological role, functions in the biosynthesis of branched-chain amino acids. Catalyzes the dehydration of (2R,3R)-2,3-dihydroxy-3-methylpentanoate (2,3-dihydroxy-3-methylvalerate) into 2-oxo-3-methylpentanoate (2-oxo-3-methylvalerate) and of (2R)-2,3-dihydroxy-3-methylbutanoate (2,3-dihydroxyisovalerate) into 2-oxo-3-methylbutanoate (2-oxoisovalerate), the penultimate precursor to L-isoleucine and L-valine, respectively. The protein is Dihydroxy-acid dehydratase of Nitratidesulfovibrio vulgaris (strain DP4) (Desulfovibrio vulgaris).